The following is a 313-amino-acid chain: 2,3-dihydroxyphenylpropionate/2,3-dihydroxicinnamic acid 1,2-dioxygenase (313 aa).

The active-site Proton donor is H116. The Proton acceptor role is filled by H180.

The protein belongs to the LigB/MhpB extradiol dioxygenase family. Homotetramer. The cofactor is Fe(2+).

It carries out the reaction 3-(2,3-dihydroxyphenyl)propanoate + O2 = (2Z,4E)-2-hydroxy-6-oxonona-2,4-dienedioate + H(+). It catalyses the reaction (2E)-3-(2,3-dihydroxyphenyl)prop-2-enoate + O2 = (2Z,4E,7E)-2-hydroxy-6-oxonona-2,4,7-trienedioate + H(+). Its pathway is aromatic compound metabolism; 3-phenylpropanoate degradation. In terms of biological role, catalyzes the non-heme iron(II)-dependent oxidative cleavage of 2,3-dihydroxyphenylpropionic acid and 2,3-dihydroxicinnamic acid into 2-hydroxy-6-ketononadienedioate and 2-hydroxy-6-ketononatrienedioate, respectively. In Mycobacterium sp. (strain MCS), this protein is 2,3-dihydroxyphenylpropionate/2,3-dihydroxicinnamic acid 1,2-dioxygenase.